Reading from the N-terminus, the 994-residue chain is Valine--tRNA ligase (994 aa).

The 'HIGH' region signature appears at 43 to 53 (PNVTGTLHMGH). Residues 332-356 (IASGATSDTTDTPSDSDASNASNQH) form a disordered region. Positions 333–353 (ASGATSDTTDTPSDSDASNAS) are enriched in low complexity. The 'KMSKS' region signature appears at 585–589 (KMSKS). Lysine 588 contacts ATP. The disordered stretch occupies residues 691–713 (TAHSPAQHQAGQDGQDVPRTPQP). Residues 928–994 (LIDVDAERAR…NGLRERRTTL (67 aa)) adopt a coiled-coil conformation.

This sequence belongs to the class-I aminoacyl-tRNA synthetase family. ValS type 1 subfamily. In terms of assembly, monomer.

The protein resides in the cytoplasm. The catalysed reaction is tRNA(Val) + L-valine + ATP = L-valyl-tRNA(Val) + AMP + diphosphate. In terms of biological role, catalyzes the attachment of valine to tRNA(Val). As ValRS can inadvertently accommodate and process structurally similar amino acids such as threonine, to avoid such errors, it has a 'posttransfer' editing activity that hydrolyzes mischarged Thr-tRNA(Val) in a tRNA-dependent manner. The protein is Valine--tRNA ligase of Xylella fastidiosa (strain M23).